A 193-amino-acid polypeptide reads, in one-letter code: Ion-translocating oxidoreductase complex subunit B (193 aa).

Residues 1–23 (MTFLFIVITLLALIFGAILGFAS) are hydrophobic. One can recognise a 4Fe-4S domain in the interval 29-87 (EADPVVEKIDAILPQSQCGQCGYPGCKPYAEAICNGDEITKCIPGGQTTIVKIAEILGV). [4Fe-4S] cluster is bound by residues Cys-46, Cys-49, Cys-54, Cys-70, Cys-110, Cys-113, Cys-116, Cys-120, Cys-140, Cys-143, Cys-146, and Cys-150. 2 consecutive 4Fe-4S ferredoxin-type domains span residues 101–130 (KVAF…GTNK) and 131–160 (AMHT…MIPV).

It belongs to the 4Fe4S bacterial-type ferredoxin family. RnfB subfamily. In terms of assembly, the complex is composed of six subunits: RnfA, RnfB, RnfC, RnfD, RnfE and RnfG. The cofactor is [4Fe-4S] cluster.

The protein localises to the cell inner membrane. In terms of biological role, part of a membrane-bound complex that couples electron transfer with translocation of ions across the membrane. This chain is Ion-translocating oxidoreductase complex subunit B, found in Haemophilus influenzae (strain 86-028NP).